We begin with the raw amino-acid sequence, 608 residues long: Isocitrate dehydrogenase kinase/phosphatase (608 aa).

ATP is bound by residues 327–333 (APGIKGL) and lysine 348. Residue aspartate 383 is part of the active site. The interval 589 to 608 (FDSTPDAGDGDSAGDAQRAA) is disordered.

The protein belongs to the AceK family.

The protein localises to the cytoplasm. The enzyme catalyses L-seryl-[isocitrate dehydrogenase] + ATP = O-phospho-L-seryl-[isocitrate dehydrogenase] + ADP + H(+). Bifunctional enzyme which can phosphorylate or dephosphorylate isocitrate dehydrogenase (IDH) on a specific serine residue. This is a regulatory mechanism which enables bacteria to bypass the Krebs cycle via the glyoxylate shunt in response to the source of carbon. When bacteria are grown on glucose, IDH is fully active and unphosphorylated, but when grown on acetate or ethanol, the activity of IDH declines drastically concomitant with its phosphorylation. The sequence is that of Isocitrate dehydrogenase kinase/phosphatase from Burkholderia ambifaria (strain MC40-6).